Consider the following 212-residue polypeptide: ATP-dependent Clp protease proteolytic subunit (212 aa).

Ser-114 serves as the catalytic Nucleophile. His-139 is an active-site residue.

This sequence belongs to the peptidase S14 family. As to quaternary structure, fourteen ClpP subunits assemble into 2 heptameric rings which stack back to back to give a disk-like structure with a central cavity, resembling the structure of eukaryotic proteasomes.

The protein localises to the cytoplasm. The enzyme catalyses Hydrolysis of proteins to small peptides in the presence of ATP and magnesium. alpha-casein is the usual test substrate. In the absence of ATP, only oligopeptides shorter than five residues are hydrolyzed (such as succinyl-Leu-Tyr-|-NHMec, and Leu-Tyr-Leu-|-Tyr-Trp, in which cleavage of the -Tyr-|-Leu- and -Tyr-|-Trp bonds also occurs).. Cleaves peptides in various proteins in a process that requires ATP hydrolysis. Has a chymotrypsin-like activity. Plays a major role in the degradation of misfolded proteins. In Laribacter hongkongensis (strain HLHK9), this protein is ATP-dependent Clp protease proteolytic subunit.